Consider the following 155-residue polypeptide: Endoribonuclease YbeY (155 aa).

H119, H123, and H129 together coordinate Zn(2+).

Belongs to the endoribonuclease YbeY family. Zn(2+) serves as cofactor.

It is found in the cytoplasm. Single strand-specific metallo-endoribonuclease involved in late-stage 70S ribosome quality control and in maturation of the 3' terminus of the 16S rRNA. This is Endoribonuclease YbeY from Mycoplasmopsis synoviae (strain 53) (Mycoplasma synoviae).